The sequence spans 122 residues: Fluoride-specific ion channel FluC (122 aa).

Helical transmembrane passes span 6–26, 33–53, 60–80, and 101–121; these read LVVG…INLV, SISF…GLLF, GLSP…FTTF, and LNII…FLIF. Na(+) contacts are provided by Gly75 and Thr78.

It belongs to the fluoride channel Fluc/FEX (TC 1.A.43) family.

The protein resides in the cell inner membrane. The catalysed reaction is fluoride(in) = fluoride(out). Na(+) is not transported, but it plays an essential structural role and its presence is essential for fluoride channel function. In terms of biological role, fluoride-specific ion channel. Important for reducing fluoride concentration in the cell, thus reducing its toxicity. The protein is Fluoride-specific ion channel FluC of Campylobacter jejuni subsp. jejuni serotype O:2 (strain ATCC 700819 / NCTC 11168).